A 504-amino-acid polypeptide reads, in one-letter code: Maturase K (504 aa).

This sequence belongs to the intron maturase 2 family. MatK subfamily.

It localises to the plastid. The protein localises to the chloroplast. Functionally, usually encoded in the trnK tRNA gene intron. Probably assists in splicing its own and other chloroplast group II introns. The protein is Maturase K of Quercus suber (Cork oak).